Here is a 249-residue protein sequence, read N- to C-terminus: Methyl-coenzyme M reductase subunit gamma (249 aa).

The interval Arg43 to Pro62 is disordered. Residue Arg120 participates in coenzyme M binding.

It belongs to the methyl-coenzyme M reductase gamma subunit family. MCR is a hexamer of two alpha, two beta, and two gamma chains, forming a dimer of heterotrimers. Coenzyme F430 serves as cofactor.

It localises to the cytoplasm. The enzyme catalyses coenzyme B + methyl-coenzyme M = methane + coenzyme M-coenzyme B heterodisulfide. It functions in the pathway one-carbon metabolism; methyl-coenzyme M reduction; methane from methyl-coenzyme M: step 1/1. Its function is as follows. Component of the methyl-coenzyme M reductase (MCR) I that catalyzes the reductive cleavage of methyl-coenzyme M (CoM-S-CH3 or 2-(methylthio)ethanesulfonate) using coenzyme B (CoB or 7-mercaptoheptanoylthreonine phosphate) as reductant which results in the production of methane and the mixed heterodisulfide of CoB and CoM (CoM-S-S-CoB). This is the final step in methanogenesis. The chain is Methyl-coenzyme M reductase subunit gamma (mcrG) from Methanothermus fervidus.